A 454-amino-acid polypeptide reads, in one-letter code: Transcription factor efuD (454 aa).

Residues 4 to 111 (AKELIRITAR…NYHRAIDSIK (108 aa)) form the HTH TFE/IIEalpha-type domain. Residues 327–454 (LRTDDDGAMD…DEDELEFEDI (128 aa)) are disordered. Acidic residues predominate over residues 353–372 (DQDEEEEEEDDDDDEFEDVD). The span at 387–401 (SVSTPATSAQVSSTA) shows a compositional bias: polar residues. The span at 423-437 (APAAAASSQAAAAES) shows a compositional bias: low complexity. Acidic residues predominate over residues 442–454 (SDEDEDELEFEDI).

The protein belongs to the TFIIE alpha subunit family.

The protein resides in the nucleus. Its function is as follows. Transcription factor; part of the gene cluster that mediates the biosynthesis of enfumafungin, a glycosylated fernene-type triterpenoid with potent antifungal activity, mediated by its interaction with beta-1,3-glucan synthase and the fungal cell wall. Is possibly responsible for the transcription regulation of one or more genes within the gene cluster. This chain is Transcription factor efuD, found in Hormonema carpetanum.